A 354-amino-acid polypeptide reads, in one-letter code: Biotin synthase (354 aa).

The 228-residue stretch at 41–268 (NEVQISRLLS…LSRVRLSAGR (228 aa)) folds into the Radical SAM core domain. [4Fe-4S] cluster-binding residues include Cys56, Cys60, and Cys63. [2Fe-2S] cluster-binding residues include Cys100, Cys131, Cys191, and Arg263.

It belongs to the radical SAM superfamily. Biotin synthase family. As to quaternary structure, homodimer. The cofactor is [4Fe-4S] cluster. It depends on [2Fe-2S] cluster as a cofactor.

The catalysed reaction is (4R,5S)-dethiobiotin + (sulfur carrier)-SH + 2 reduced [2Fe-2S]-[ferredoxin] + 2 S-adenosyl-L-methionine = (sulfur carrier)-H + biotin + 2 5'-deoxyadenosine + 2 L-methionine + 2 oxidized [2Fe-2S]-[ferredoxin]. It functions in the pathway cofactor biosynthesis; biotin biosynthesis; biotin from 7,8-diaminononanoate: step 2/2. In terms of biological role, catalyzes the conversion of dethiobiotin (DTB) to biotin by the insertion of a sulfur atom into dethiobiotin via a radical-based mechanism. This chain is Biotin synthase, found in Shewanella amazonensis (strain ATCC BAA-1098 / SB2B).